A 1755-amino-acid polypeptide reads, in one-letter code: Transposon Ty1-OL Gag-Pol polyprotein (1755 aa).

Polar residues-rich tracts occupy residues 1 to 23 (MESQ…SVTS), 48 to 60 (TKAN…TPAS), and 127 to 152 (QSQF…GNTF). 3 disordered regions span residues 1–93 (MESQ…MMTQ), 126–173 (PQSQ…RPPP), and 352–421 (GSRN…SKST). Low complexity predominate over residues 153 to 165 (TDSSSADSDMTST). The RNA-binding stretch occupies residues 299-401 (NNGIHINNKV…NSKSKTARAH (103 aa)). Positions 402 to 418 (NVSTSNNSPSTDNDSIS) are enriched in low complexity. Ser-416 carries the phosphoserine modification. Asp-461 acts as the For protease activity; shared with dimeric partner in catalysis. An integrase-type zinc finger-like region spans residues 583–640 (NVHTSESTRKYPYPFIHRMLAHANAQTIRYSLKNNTITYFNESDVDWSSAIDYQCPDC). The 176-residue stretch at 660-835 (NSYEPFQYLH…AGLDISTLLP (176 aa)) folds into the Integrase catalytic domain. Asp-671 and Asp-736 together coordinate Mg(2+). Disordered stretches follow at residues 956–1087 (SKAV…ETEK), 1092–1111 (RSPS…NIVP), and 1130–1171 (DLPL…DSNA). Low complexity predominate over residues 960 to 969 (SPTDSTPPST). A compositionally biased stretch (polar residues) spans 1005–1015 (STPQISNIEST). A compositionally biased stretch (basic and acidic residues) spans 1038-1053 (ESSHASKSKDFRHSDS). Polar residues-rich tracts occupy residues 1054 to 1082 (YSEN…QISD) and 1101 to 1111 (PENNSSHNIVP). The Bipartite nuclear localization signal signature appears at 1178-1212 (KKRSLEDNETEIKVSRDTWNTKNMRSLEPPRSKKR). Residues 1338–1476 (NNYYITQLDI…DILGLEIKYQ (139 aa)) enclose the Reverse transcriptase Ty1/copia-type domain. Residues Asp-1346, Asp-1427, Asp-1428, Asp-1610, Glu-1652, and Asp-1685 each coordinate Mg(2+). An RNase H Ty1/copia-type domain is found at 1610–1752 (DASYGNQPYY…IKTFKLLTNK (143 aa)).

The capsid protein forms a homotrimer, from which the VLPs are assembled. The protease is a homodimer, whose active site consists of two apposed aspartic acid residues. Initially, virus-like particles (VLPs) are composed of the structural unprocessed proteins Gag and Gag-Pol, and also contain the host initiator methionine tRNA (tRNA(i)-Met) which serves as a primer for minus-strand DNA synthesis, and a dimer of genomic Ty RNA. Processing of the polyproteins occurs within the particle and proceeds by an ordered pathway, called maturation. First, the protease (PR) is released by autocatalytic cleavage of the Gag-Pol polyprotein yielding capsid protein p45 and a Pol-p154 precursor protein. This cleavage is a prerequisite for subsequent processing of Pol-p154 at the remaining sites to release the mature structural and catalytic proteins. Maturation takes place prior to the RT reaction and is required to produce transposition-competent VLPs.

The protein resides in the cytoplasm. It is found in the nucleus. It carries out the reaction DNA(n) + a 2'-deoxyribonucleoside 5'-triphosphate = DNA(n+1) + diphosphate. It catalyses the reaction Endonucleolytic cleavage to 5'-phosphomonoester.. Capsid protein (CA) is the structural component of the virus-like particle (VLP), forming the shell that encapsulates the retrotransposons dimeric RNA genome. The particles are assembled from trimer-clustered units and there are holes in the capsid shells that allow for the diffusion of macromolecules. CA also has nucleocapsid-like chaperone activity, promoting primer tRNA(i)-Met annealing to the multipartite primer-binding site (PBS), dimerization of Ty1 RNA and initiation of reverse transcription. Functionally, the aspartyl protease (PR) mediates the proteolytic cleavages of the Gag and Gag-Pol polyproteins after assembly of the VLP. In terms of biological role, reverse transcriptase/ribonuclease H (RT) is a multifunctional enzyme that catalyzes the conversion of the retro-elements RNA genome into dsDNA within the VLP. The enzyme displays a DNA polymerase activity that can copy either DNA or RNA templates, and a ribonuclease H (RNase H) activity that cleaves the RNA strand of RNA-DNA heteroduplexes during plus-strand synthesis and hydrolyzes RNA primers. The conversion leads to a linear dsDNA copy of the retrotransposon that includes long terminal repeats (LTRs) at both ends. Its function is as follows. Integrase (IN) targets the VLP to the nucleus, where a subparticle preintegration complex (PIC) containing at least integrase and the newly synthesized dsDNA copy of the retrotransposon must transit the nuclear membrane. Once in the nucleus, integrase performs the integration of the dsDNA into the host genome. This is Transposon Ty1-OL Gag-Pol polyprotein (TY1B-OL) from Saccharomyces cerevisiae (strain ATCC 204508 / S288c) (Baker's yeast).